The chain runs to 792 residues: MVTKAKIPLFLFLSALFLALVCSSLALETEDLSNELNPHHDPESHRWEFQQCQERCQHEERGQRQAQQCQRRCEEQLREREREREREEIVDPREPRKQYEQCRETCEKQDPRQQPQCERRCERQFQEQQERERRERRRGRDDDDKENPRDPREQYRQCEEHCRRQGQGQRQQQQCQSRCEERFEEEQRRQEERERRRGRDNDDEENPRDPREQYRQCQEHCRRQGQGQRQQQQCQSRCEERLEEEQRKQEERERRRGRDEDDQNPRDPEQRYEQCQQQCERQRRGQEQQLCRRRCEQQRQQEERERQRGRDRQDPQQQYHRCQRRCQTQEQSPERQRQCQQRCERQYKEQQGREWGPDQASPRRESRGREEEQQRHNPYYFHSQGLRSRHESGEGEVKYLERFTERTELLRGIENYRVVILEANPNTFVLPYHKDAESVIVVTRGRATLTFVSQERRESFNLEYGDVIRVPAGATEYVINQDSNERLEMVKLLQPVNNPGQFREYYAAGAQSTESYLRVFSNDILVAALNTPRDRLERFFDQQEQREGVIIRASQEKLRALSQHAMSAGQRPWGRRSSGGPISLKSQRSSYSNQFGQFFEACPEEHRQLQEMDVLVNYAEIKRGAMMVPHYNSKATVVVYVVEGTGRFEMACPHDVSSQSYEYKGRREQEEEESSTGQFQKVTARLARGDIFVIPAGHPIAITASQNENLRLVGFGINGKNNQRNFLAGQNNIINQLEREAKELSFNMPREEIEEIFERQVESYFVPMERQSRRGQGRDHPLASILDFAGFF.

The N-terminal stretch at 1 to 26 (MVTKAKIPLFLFLSALFLALVCSSLA) is a signal peptide. Disordered stretches follow at residues 132-153 (ERRE…DPRE), 182-217 (RFEE…YRQC), 240-272 (ERLE…EQRY), 302-325 (EERE…CQRR), and 350-394 (QQGR…ESGE). 2 stretches are compositionally biased toward basic and acidic residues: residues 182–200 (RFEE…RGRD) and 207–217 (PRDPREQYRQC). Over residues 302 to 314 (EERERQRGRDRQD) the composition is skewed to basic and acidic residues. The span at 315 to 325 (PQQQYHRCQRR) shows a compositional bias: low complexity. Basic and acidic residues predominate over residues 350–375 (QQGREWGPDQASPRRESRGREEEQQR). Cu cation is bound at residue Tyr-379. Cupin type-1 domains lie at 384 to 537 (QGLR…DRLE) and 582 to 754 (ISLK…EEIE). Cu cation contacts are provided by Cys-652, His-654, and His-698. Positions 727-754 (LAGQNNIINQLEREAKELSFNMPREEIE) form a coiled coil.

The protein belongs to the 7S seed storage protein family. As to quaternary structure, homotrimer. Expressed in seed (at protein level). Expressed in seed.

Functionally, seed storage protein. The chain is Vicilin Car i 2.0101 from Carya illinoinensis (Pecan).